Consider the following 104-residue polypeptide: uncharacterized protein (104 aa).

This is an uncharacterized protein from Homo sapiens (Human).